We begin with the raw amino-acid sequence, 387 residues long: Zinc finger transcription factor YY1 (387 aa).

C2H2-type zinc fingers lie at residues 79 to 103 (FLCS…SHIH), 108 to 132 (YVCD…YLIH), 138 to 162 (YICT…MKTH), 168 to 193 (HICP…AAYH), and 230 to 255 (YACP…KREH). The segment at 201 to 290 (TPKYTPPAEK…DDGSDQDVYR (90 aa)) is MED18-binding. A disordered region spans residues 258-387 (HLQEENADTP…DDDEETEYED (130 aa)). Ser284 is subject to Phosphoserine. Basic residues predominate over residues 291-305 (KHASNGKGQTHKQQS). The Nuclear localization signal motif lies at 319-326 (GKKGSTSS). Residues 339–367 (AKETFEEVEREEEEDSEETEEDRDNVEDG) are a coiled coil. Acidic residues-rich tracts occupy residues 344–363 (EEVE…DRDN) and 373–387 (NNED…EYED).

In terms of assembly, interacts with MED18 to suppress disease susceptibility via the repression of genes glutaredoxins GRX480, GRXS13 and thioredoxin TRX-h5. As to expression, mostly expressed in flowers, to a lower extent in seedlings, stems and leaves, and, at low levels, in roots and senescent leaves.

The protein localises to the nucleus. In terms of biological role, dual-function transcription factor with both repression and activation activities. Binds to 5'-CCATATT-3' motif in target gene promoters (e.g. ABR1). Also binds to G-rich DNA motif 5'-GGGGGCAGTGG-3'. Regulates the expression of genes involved in diverse cellular pathways, including glucose metabolism, photosynthesis, phototropism and stress response (e.g. salt, drought and osmotic stress). Regulates plant immunity, especially during necrotrophic fungal infection (e.g. B.cinerea). Binds to ABR1 promoter and promotes its expression, thus negatively regulating the abscisic acid (ABA) signaling pathway. Represses ABA- and salt-responsive genes expression. The protein is Zinc finger transcription factor YY1 of Arabidopsis thaliana (Mouse-ear cress).